We begin with the raw amino-acid sequence, 261 residues long: Non-structural protein 2a (261 aa).

Belongs to the coronaviruses ns2a protein family.

The protein localises to the host cytoplasm. Functionally, not essential for virus replication in transformed murine cells. The chain is Non-structural protein 2a from Mus musculus (Mouse).